We begin with the raw amino-acid sequence, 481 residues long: Cytochrome c oxidase subunit 1 (481 aa).

The helical transmembrane segment at 22 to 42 threads the bilayer; sequence ISYLWLAYWFGMIGFYMSVLI. Residues E45 and G50 each coordinate Ca(2+). Helical transmembrane passes span 64 to 84, 109 to 129, 151 to 171, 194 to 214, 240 to 260, 278 to 298, 309 to 329, and 343 to 363; these read LLFT…GLFG, SLLF…LEIG, FIIF…VNFI, IVLT…VFLM, LFWF…FGII, MILA…TSYV, YFTT…FNWV, and LVLF…TGVV. H69 is a binding site for Fe(II)-heme a. H246 contacts Cu cation. The 1'-histidyl-3'-tyrosine (His-Tyr) cross-link spans 246 to 250; sequence HPEVY. An O2-binding site is contributed by Y250. 2 residues coordinate Mg(2+): H374 and D375. H382 is a binding site for heme a3. A run of 2 helical transmembrane segments spans residues 382 to 402 and 420 to 440; these read HFHF…IIYI and IAPI…FTGF. H384 serves as a coordination point for Fe(II)-heme a. P448 is a binding site for Ca(2+). The chain crosses the membrane as a helical span at residues 459–479; sequence FICTLGATMMLVLKLAILFII.

It belongs to the heme-copper respiratory oxidase family. Component of the cytochrome c oxidase (complex IV, CIV), a multisubunit enzyme composed of a catalytic core of 3 subunits and several supernumerary subunits. The complex exists as a monomer or a dimer and forms supercomplexes (SCs) in the inner mitochondrial membrane with ubiquinol-cytochrome c oxidoreductase (cytochrome b-c1 complex, complex III, CIII). Heme serves as cofactor. Requires Cu cation as cofactor.

The protein resides in the mitochondrion inner membrane. It catalyses the reaction 4 Fe(II)-[cytochrome c] + O2 + 8 H(+)(in) = 4 Fe(III)-[cytochrome c] + 2 H2O + 4 H(+)(out). The protein operates within energy metabolism; oxidative phosphorylation. Component of the cytochrome c oxidase, the last enzyme in the mitochondrial electron transport chain which drives oxidative phosphorylation. The respiratory chain contains 3 multisubunit complexes succinate dehydrogenase (complex II, CII), ubiquinol-cytochrome c oxidoreductase (cytochrome b-c1 complex, complex III, CIII) and cytochrome c oxidase (complex IV, CIV), that cooperate to transfer electrons derived from NADH and succinate to molecular oxygen, creating an electrochemical gradient over the inner membrane that drives transmembrane transport and the ATP synthase. Cytochrome c oxidase is the component of the respiratory chain that catalyzes the reduction of oxygen to water. Electrons originating from reduced cytochrome c in the intermembrane space (IMS) are transferred via the dinuclear copper A center (CU(A)) of subunit 2 and heme A of subunit 1 to the active site in subunit 1, a binuclear center (BNC) formed by heme A3 and copper B (CU(B)). The BNC reduces molecular oxygen to 2 water molecules using 4 electrons from cytochrome c in the IMS and 4 protons from the mitochondrial matrix. This Theileria parva (East coast fever infection agent) protein is Cytochrome c oxidase subunit 1 (MT-CO1).